Consider the following 226-residue polypeptide: 2-amino-5-formylamino-6-ribosylaminopyrimidin-4(3H)-one 5'-monophosphate deformylase (226 aa).

The Fe cation site is built by glutamate 29, histidine 31, aspartate 40, and histidine 108.

The protein belongs to the creatininase superfamily. FAPy deformylase family. In terms of assembly, homodimer. It depends on Fe(2+) as a cofactor. Zn(2+) serves as cofactor.

It catalyses the reaction 2-amino-5-formylamino-6-(5-phospho-D-ribosylamino)pyrimidin-4(3H)-one + H2O = 2,5-diamino-6-(1-D-ribosylamino)pyrimidin-4(3H)-one 5'-phosphate + formate + H(+). Its pathway is cofactor biosynthesis; coenzyme F420 biosynthesis. The protein operates within cofactor biosynthesis; riboflavin biosynthesis. Its function is as follows. Catalyzes the hydrolysis of the formamide of 2-amino-5-formylamino-6-ribosylamino-4(3H)-pyrimidinone 5'-monophosphate (FAPy) to form 2,5-diamino-6-ribosylamino-4(3H)-pyrimidinone 5'-phosphate (APy). This is 2-amino-5-formylamino-6-ribosylaminopyrimidin-4(3H)-one 5'-monophosphate deformylase from Methanocaldococcus vulcanius (strain ATCC 700851 / DSM 12094 / M7) (Methanococcus vulcanius).